The primary structure comprises 137 residues: MQGTISCARNYNMTTTVGESLRPLSLKTQGNGERVRMVVEENAVIVIGRRGCCMCHVVRRLLLGLGVNPAVLEIDEEREDEVLSELENIGVQGGGGTVKLPAVYVGGRLFGGLDRVMATHISGELVPILKEVGALWL.

Positions 32–136 constitute a Glutaredoxin domain; it reads GERVRMVVEE…PILKEVGALW (105 aa). Residues Cys52 and Cys55 are joined by a disulfide bond. A Responsive for interaction with TGA factors motif is present at residues 134-137; the sequence is ALWL.

Belongs to the glutaredoxin family. CC-type subfamily. In terms of assembly, interacts with TGA2 and TGA6.

The protein resides in the cytoplasm. It localises to the nucleus. Its function is as follows. Has a glutathione-disulfide oxidoreductase activity in the presence of NADPH and glutathione reductase. Reduces low molecular weight disulfides and proteins. The chain is Glutaredoxin-C9 (GRXC9) from Arabidopsis thaliana (Mouse-ear cress).